The primary structure comprises 208 residues: MDSKSGRSESAINIPESNSTKHKSTVVHTATKVAAVAPRGGGWRRGVSIFDFILRICALAAALAATATMGTTDQTLPFFTQFFQFQASYDDLPAFTFFVVANGIASGYLVLSLPFSIATIVRPHAAAIKLLLIIFDTVMVAFTAAAAAAAAAIVYLAHNGNSKTNWFAICQQFNDFCQRVSGAVVASFVAAVILIFLVVLSAVAIRKH.

The tract at residues 1-23 (MDSKSGRSESAINIPESNSTKHK) is disordered. Topologically, residues 1–46 (MDSKSGRSESAINIPESNSTKHKSTVVHTATKVAAVAPRGGGWRRG) are cytoplasmic. Positions 8 to 18 (SESAINIPESN) are enriched in polar residues. The chain crosses the membrane as a helical span at residues 47-67 (VSIFDFILRICALAAALAATA). At 68 to 96 (TMGTTDQTLPFFTQFFQFQASYDDLPAFT) the chain is on the extracellular side. A helical membrane pass occupies residues 97–117 (FFVVANGIASGYLVLSLPFSI). Residues 118-129 (ATIVRPHAAAIK) lie on the Cytoplasmic side of the membrane. Residues 130–150 (LLLIIFDTVMVAFTAAAAAAA) form a helical membrane-spanning segment. Over 151 to 184 (AAIVYLAHNGNSKTNWFAICQQFNDFCQRVSGAV) the chain is Extracellular. The helical transmembrane segment at 185-205 (VASFVAAVILIFLVVLSAVAI) threads the bilayer. Residues 206–208 (RKH) lie on the Cytoplasmic side of the membrane.

Belongs to the Casparian strip membrane proteins (CASP) family. As to quaternary structure, homodimer and heterodimers.

It localises to the cell membrane. Regulates membrane-cell wall junctions and localized cell wall deposition. Required for establishment of the Casparian strip membrane domain (CSD) and the subsequent formation of Casparian strips, a cell wall modification of the root endodermis that determines an apoplastic barrier between the intraorganismal apoplasm and the extraorganismal apoplasm and prevents lateral diffusion. The chain is Casparian strip membrane protein 2 from Triphysaria pusilla (Dwarf owl's-clover).